The following is a 226-amino-acid chain: Phosphoribosylformylglycinamidine synthase subunit PurQ (226 aa).

A Glutamine amidotransferase type-1 domain is found at 2–226 (KFAVIQFPGS…LKNFLVTVKN (225 aa)). Cys-86 (nucleophile) is an active-site residue. Residues His-195 and Glu-197 contribute to the active site.

In terms of assembly, part of the FGAM synthase complex composed of 1 PurL, 1 PurQ and 2 PurS subunits.

The protein resides in the cytoplasm. The enzyme catalyses N(2)-formyl-N(1)-(5-phospho-beta-D-ribosyl)glycinamide + L-glutamine + ATP + H2O = 2-formamido-N(1)-(5-O-phospho-beta-D-ribosyl)acetamidine + L-glutamate + ADP + phosphate + H(+). It catalyses the reaction L-glutamine + H2O = L-glutamate + NH4(+). The protein operates within purine metabolism; IMP biosynthesis via de novo pathway; 5-amino-1-(5-phospho-D-ribosyl)imidazole from N(2)-formyl-N(1)-(5-phospho-D-ribosyl)glycinamide: step 1/2. In terms of biological role, part of the phosphoribosylformylglycinamidine synthase complex involved in the purines biosynthetic pathway. Catalyzes the ATP-dependent conversion of formylglycinamide ribonucleotide (FGAR) and glutamine to yield formylglycinamidine ribonucleotide (FGAM) and glutamate. The FGAM synthase complex is composed of three subunits. PurQ produces an ammonia molecule by converting glutamine to glutamate. PurL transfers the ammonia molecule to FGAR to form FGAM in an ATP-dependent manner. PurS interacts with PurQ and PurL and is thought to assist in the transfer of the ammonia molecule from PurQ to PurL. The protein is Phosphoribosylformylglycinamidine synthase subunit PurQ of Lactococcus lactis subsp. cremoris (Streptococcus cremoris).